The following is a 95-amino-acid chain: Protein TusB (95 aa).

This sequence belongs to the DsrH/TusB family. Heterohexamer, formed by a dimer of trimers. The hexameric TusBCD complex contains 2 copies each of TusB, TusC and TusD. The TusBCD complex interacts with TusE.

Its subcellular location is the cytoplasm. In terms of biological role, part of a sulfur-relay system required for 2-thiolation of 5-methylaminomethyl-2-thiouridine (mnm(5)s(2)U) at tRNA wobble positions. This Buchnera aphidicola subsp. Baizongia pistaciae (strain Bp) protein is Protein TusB.